The primary structure comprises 293 residues: Heterogeneous nuclear ribonucleoprotein C-like 4 (293 aa).

The RRM domain occupies 16 to 87 (SRVFIGNLNT…QVVDINLAAE (72 aa)). Disordered regions lie at residues 140-177 (VVPSKRQRISGNTSRRGKSGFNSKSGKRGSSKSGKLKG) and 208-293 (HCKQ…QDDS). A coiled-coil region spans residues 177-208 (GDDLQAIKQELTQIKQKVDSLLENLEKIEKEH). Composition is skewed to basic and acidic residues over residues 208–222 (HCKQGVEVKNAKSEE) and 229–240 (SKKDKTHVKMES). A compositionally biased stretch (acidic residues) spans 242 to 263 (GGADDSVEEGDLLCDDDNEDQG). Basic and acidic residues predominate over residues 269-293 (LIKDDEKGAEEGEDDRDRANGQDDS).

It belongs to the RRM HNRPC family. RALY subfamily.

The protein resides in the nucleus. The protein is Heterogeneous nuclear ribonucleoprotein C-like 4 of Homo sapiens (Human).